The primary structure comprises 689 residues: Glycine--tRNA ligase beta subunit (689 aa).

It belongs to the class-II aminoacyl-tRNA synthetase family. In terms of assembly, tetramer of two alpha and two beta subunits.

The protein localises to the cytoplasm. The enzyme catalyses tRNA(Gly) + glycine + ATP = glycyl-tRNA(Gly) + AMP + diphosphate. This Actinobacillus succinogenes (strain ATCC 55618 / DSM 22257 / CCUG 43843 / 130Z) protein is Glycine--tRNA ligase beta subunit.